Reading from the N-terminus, the 543-residue chain is Chaperonin GroEL (543 aa).

Residues 29-32 (TVGP), 86-90 (DGTTT), glycine 413, and aspartate 504 each bind ATP.

The protein belongs to the chaperonin (HSP60) family. In terms of assembly, forms a cylinder of 14 subunits composed of two heptameric rings stacked back-to-back. Interacts with the co-chaperonin GroES.

It is found in the cytoplasm. It catalyses the reaction ATP + H2O + a folded polypeptide = ADP + phosphate + an unfolded polypeptide.. In terms of biological role, together with its co-chaperonin GroES, plays an essential role in assisting protein folding. The GroEL-GroES system forms a nano-cage that allows encapsulation of the non-native substrate proteins and provides a physical environment optimized to promote and accelerate protein folding. This Mycoplasma genitalium (strain ATCC 33530 / DSM 19775 / NCTC 10195 / G37) (Mycoplasmoides genitalium) protein is Chaperonin GroEL.